A 425-amino-acid chain; its full sequence is Multifunctional CCA protein (425 aa).

Residues G8 and R11 each coordinate ATP. CTP contacts are provided by G8 and R11. 2 residues coordinate Mg(2+): D21 and D23. Residues R91, R141, and R144 each coordinate ATP. CTP is bound by residues R91, R141, and R144. The HD domain occupies 230–331 (TGVHLMMVLD…VRLLERCDAI (102 aa)).

It belongs to the tRNA nucleotidyltransferase/poly(A) polymerase family. Bacterial CCA-adding enzyme type 1 subfamily. As to quaternary structure, monomer. Can also form homodimers and oligomers. Requires Mg(2+) as cofactor. Ni(2+) serves as cofactor.

It carries out the reaction a tRNA precursor + 2 CTP + ATP = a tRNA with a 3' CCA end + 3 diphosphate. The catalysed reaction is a tRNA with a 3' CCA end + 2 CTP + ATP = a tRNA with a 3' CCACCA end + 3 diphosphate. Functionally, catalyzes the addition and repair of the essential 3'-terminal CCA sequence in tRNAs without using a nucleic acid template. Adds these three nucleotides in the order of C, C, and A to the tRNA nucleotide-73, using CTP and ATP as substrates and producing inorganic pyrophosphate. tRNA 3'-terminal CCA addition is required both for tRNA processing and repair. Also involved in tRNA surveillance by mediating tandem CCA addition to generate a CCACCA at the 3' terminus of unstable tRNAs. While stable tRNAs receive only 3'-terminal CCA, unstable tRNAs are marked with CCACCA and rapidly degraded. The polypeptide is Multifunctional CCA protein (Acidovorax sp. (strain JS42)).